We begin with the raw amino-acid sequence, 89 residues long: Small ribosomal subunit protein bS20 (89 aa).

Polar residues predominate over residues 1–11; it reads MANIKSQIKRN. Residues 1-22 form a disordered region; that stretch reads MANIKSQIKRNLTNEKRRLRNK.

The protein belongs to the bacterial ribosomal protein bS20 family.

Functionally, binds directly to 16S ribosomal RNA. In Frankia casuarinae (strain DSM 45818 / CECT 9043 / HFP020203 / CcI3), this protein is Small ribosomal subunit protein bS20.